The chain runs to 155 residues: MPRFIEGKLDATGLRFGIIVSRFNSFIGERLLEGALDALVRHGGDDGDIDVVRVPGAFEIPLTAQKLVQKGNYDAVICLGAVIRGSTPHFDYVAAEVSKGIAHVSLATGVPVVFGVLTTDTIEQAIERAGTKAGNKGFDAAVTAIETARLYRELR.

5-amino-6-(D-ribitylamino)uracil-binding positions include phenylalanine 23, 57 to 59 (AFE), and 81 to 83 (AVI). 86–87 (ST) provides a ligand contact to (2S)-2-hydroxy-3-oxobutyl phosphate. Catalysis depends on histidine 89, which acts as the Proton donor. Phenylalanine 114 is a 5-amino-6-(D-ribitylamino)uracil binding site. Residue arginine 128 participates in (2S)-2-hydroxy-3-oxobutyl phosphate binding.

This sequence belongs to the DMRL synthase family.

The catalysed reaction is (2S)-2-hydroxy-3-oxobutyl phosphate + 5-amino-6-(D-ribitylamino)uracil = 6,7-dimethyl-8-(1-D-ribityl)lumazine + phosphate + 2 H2O + H(+). It participates in cofactor biosynthesis; riboflavin biosynthesis; riboflavin from 2-hydroxy-3-oxobutyl phosphate and 5-amino-6-(D-ribitylamino)uracil: step 1/2. Functionally, catalyzes the formation of 6,7-dimethyl-8-ribityllumazine by condensation of 5-amino-6-(D-ribitylamino)uracil with 3,4-dihydroxy-2-butanone 4-phosphate. This is the penultimate step in the biosynthesis of riboflavin. The chain is 6,7-dimethyl-8-ribityllumazine synthase from Geobacter sulfurreducens (strain ATCC 51573 / DSM 12127 / PCA).